The following is a 347-amino-acid chain: Phosphoribosylformylglycinamidine cyclo-ligase (347 aa).

Belongs to the AIR synthase family.

It localises to the cytoplasm. The enzyme catalyses 2-formamido-N(1)-(5-O-phospho-beta-D-ribosyl)acetamidine + ATP = 5-amino-1-(5-phospho-beta-D-ribosyl)imidazole + ADP + phosphate + H(+). It participates in purine metabolism; IMP biosynthesis via de novo pathway; 5-amino-1-(5-phospho-D-ribosyl)imidazole from N(2)-formyl-N(1)-(5-phospho-D-ribosyl)glycinamide: step 2/2. This is Phosphoribosylformylglycinamidine cyclo-ligase from Yersinia pseudotuberculosis serotype IB (strain PB1/+).